The chain runs to 409 residues: Arginine biosynthesis bifunctional protein ArgJ (409 aa).

The substrate site is built by Thr156, Lys182, Thr193, Glu280, Asn404, and Ser409. The Nucleophile role is filled by Thr193.

It belongs to the ArgJ family. As to quaternary structure, heterotetramer of two alpha and two beta chains.

The protein localises to the cytoplasm. It catalyses the reaction N(2)-acetyl-L-ornithine + L-glutamate = N-acetyl-L-glutamate + L-ornithine. The catalysed reaction is L-glutamate + acetyl-CoA = N-acetyl-L-glutamate + CoA + H(+). It functions in the pathway amino-acid biosynthesis; L-arginine biosynthesis; L-ornithine and N-acetyl-L-glutamate from L-glutamate and N(2)-acetyl-L-ornithine (cyclic): step 1/1. Its pathway is amino-acid biosynthesis; L-arginine biosynthesis; N(2)-acetyl-L-ornithine from L-glutamate: step 1/4. In terms of biological role, catalyzes two activities which are involved in the cyclic version of arginine biosynthesis: the synthesis of N-acetylglutamate from glutamate and acetyl-CoA as the acetyl donor, and of ornithine by transacetylation between N(2)-acetylornithine and glutamate. This is Arginine biosynthesis bifunctional protein ArgJ from Nitrosomonas europaea (strain ATCC 19718 / CIP 103999 / KCTC 2705 / NBRC 14298).